The following is a 932-amino-acid chain: Isoleucine--tRNA ligase (932 aa).

The 'HIGH' region motif lies at 58–68 (PYANGDIHIGH). E559 is a binding site for L-isoleucyl-5'-AMP. The 'KMSKS' region motif lies at 600–604 (KMSKS). Residue K603 coordinates ATP. Zn(2+) is bound by residues C895, C898, C915, and C918.

The protein belongs to the class-I aminoacyl-tRNA synthetase family. IleS type 1 subfamily. Monomer. Requires Zn(2+) as cofactor.

It is found in the cytoplasm. The enzyme catalyses tRNA(Ile) + L-isoleucine + ATP = L-isoleucyl-tRNA(Ile) + AMP + diphosphate. Catalyzes the attachment of isoleucine to tRNA(Ile). As IleRS can inadvertently accommodate and process structurally similar amino acids such as valine, to avoid such errors it has two additional distinct tRNA(Ile)-dependent editing activities. One activity is designated as 'pretransfer' editing and involves the hydrolysis of activated Val-AMP. The other activity is designated 'posttransfer' editing and involves deacylation of mischarged Val-tRNA(Ile). The sequence is that of Isoleucine--tRNA ligase from Saccharophagus degradans (strain 2-40 / ATCC 43961 / DSM 17024).